The chain runs to 1081 residues: Histone demethylase-like protein A (1081 aa).

A disordered region spans residues Gln-37–Tyr-173. Residues Ser-66–Ser-81 are compositionally biased toward low complexity. A compositionally biased stretch (polar residues) spans Asp-119–Ser-132. The segment covering Asn-141 to Ser-161 has biased composition (low complexity). The SWIRM domain maps to Cys-192–Leu-287. Positions Ala-902 to Ser-940 are disordered. Residues Asn-914–His-925 show a composition bias toward polar residues. Positions Ala-969–Lys-1049 form a DNA-binding region, HMG box.

The protein belongs to the flavin monoamine oxidase family.

It is found in the nucleus. Its function is as follows. H3K4 demethylase-like protein. Might not act as a H3K4 demethylase or is not the major H3K4 demethylase since its deletion does not affect whole genome H3K4 methylation. The sequence is that of Histone demethylase-like protein A from Aspergillus fumigatus (strain ATCC MYA-4609 / CBS 101355 / FGSC A1100 / Af293) (Neosartorya fumigata).